The following is a 141-amino-acid chain: Sec-independent protein translocase protein TatB (141 aa).

Residues 1–21 (MFGISFSELLLVGLVALLVLG) traverse the membrane as a helical segment. The disordered stretch occupies residues 74–141 (EAQKLLAPLT…SPPSETPRNP (68 aa)). Residues 89 to 115 (QETPPPAAESPAPSVPTPPPTSTPAVP) are compositionally biased toward pro residues. The span at 116 to 129 (PADAAAPPAVAAST) shows a compositional bias: low complexity. Over residues 130 to 141 (PPSPPSETPRNP) the composition is skewed to pro residues.

It belongs to the TatB family. The Tat system comprises two distinct complexes: a TatABC complex, containing multiple copies of TatA, TatB and TatC subunits, and a separate TatA complex, containing only TatA subunits. Substrates initially bind to the TatABC complex, which probably triggers association of the separate TatA complex to form the active translocon.

The protein localises to the cell inner membrane. Its function is as follows. Part of the twin-arginine translocation (Tat) system that transports large folded proteins containing a characteristic twin-arginine motif in their signal peptide across membranes. Together with TatC, TatB is part of a receptor directly interacting with Tat signal peptides. TatB may form an oligomeric binding site that transiently accommodates folded Tat precursor proteins before their translocation. The chain is Sec-independent protein translocase protein TatB from Pseudomonas aeruginosa (strain ATCC 15692 / DSM 22644 / CIP 104116 / JCM 14847 / LMG 12228 / 1C / PRS 101 / PAO1).